The chain runs to 461 residues: MAPSSQLEFNVVRKQPELLPPAEPTPFEWKELSDIDDQDGLRLHISGFFIYPPSTMSNVGRDNVARDIRLGLSKAMVFYYPLAGRIREGPNRKLSVECTGEGIMYCEADADVRLEQFGDIGALSMPFPFMDKVMFETVDDGILGTPLMYFQSTRFICGGIVIAGCYNHAIADGLGFYMFMAAAAQLARGAASPTPLPVWQRERLLSRVPPRVTFIHHEYIHDTPKTETANPLDNEPWPLHSIFFTRVDVAALRAQLPGHLRKSATSFEIISACLWRCRTAALRFAPDELSRLIIAVNARTKFGPPLPQGYYGNSIMLPMVVSEAGKLVLSGLGYAVELVIEAKGKVTEEYVKSVADYLVLNGRPHYVVTNTYLVSDLRQLVEMSKFDWGWGKPAYVGPADVGENAISFLATLKNGEEEGVVVPIRLPESAVGRFKSEVSKMVSFGCLEDVKPNRDGYLSRM.

Active-site proton acceptor residues include histidine 168 and aspartate 387. The Microbody targeting signal signature appears at 459–461 (SRM).

Belongs to the plant acyltransferase family. As to quaternary structure, monomer. As to expression, confined to immature fruits perisperm. Also detectable in roots.

It is found in the cytoplasm. The catalysed reaction is piperidine + (E,E)-piperoyl-CoA = piperine + CoA + H(+). The enzyme catalyses pyrrolidine + (E,E)-piperoyl-CoA = piperyline + CoA + H(+). It catalyses the reaction (E,E)-piperoyl-CoA + 2-methylpropan-1-amine = (E,E)-piperlonguminine + CoA + H(+). It functions in the pathway aromatic compound metabolism. In terms of biological role, involved in the biosynthesis of aromatic piperamides natural products such as piperine (1-piperoyl-piperidine), the pungent principle contributing, together with several terpenoids, to the aromatic properties of black pepper fruits, and displaying numerous pharmacological activities such as antiproliferative, antitumor, antiangiogenesis, antioxidant, antidiabetic, antiobesity, cardioprotective, antimicrobial, antiaging, and immunomodulatory effects. Mediates mainly the conversion of piperidine and piperoyl-CoA to piperine. Can also use pyrrolidine and isobutylamine as acceptors and 3,4-methylenedioxycinnamoyl-CoA as an alternative CoA-donor with a lower efficiency. This is Piperine synthase from Piper nigrum (Black pepper).